The following is a 70-amino-acid chain: MLARLLVGLIKLYQWTLSPLLGQRCRFYPTCSQYAVEAIQKHGAWRGAFFTICRLSKCHPWHDGGHDPVP.

This sequence belongs to the UPF0161 family.

The protein localises to the cell inner membrane. Functionally, could be involved in insertion of integral membrane proteins into the membrane. In Methylobacillus flagellatus (strain ATCC 51484 / DSM 6875 / VKM B-1610 / KT), this protein is Putative membrane protein insertion efficiency factor.